Reading from the N-terminus, the 325-residue chain is Dehydrogenase/reductase SDR family member 7B (325 aa).

Topologically, residues 1-17 are cytoplasmic; the sequence is MISPSSRKGMLKERAMD. The helical; Signal-anchor for type II membrane protein transmembrane segment at 18 to 38 threads the bilayer; the sequence is LVTQTTILPLLFGCLGIFSLF. Residues 39 to 325 lie on the Lumenal side of the membrane; it reads RLLQRTRSKA…ARKERKSKNS (287 aa). The NAD(+) site is built by Ser62 and Leu64. Ser194 is a binding site for substrate. Tyr207, Lys211, and Thr242 together coordinate NAD(+). Tyr207 (proton acceptor) is an active-site residue.

This sequence belongs to the short-chain dehydrogenases/reductases (SDR) family.

It is found in the endoplasmic reticulum membrane. In terms of biological role, putative oxidoreductase. In Rattus norvegicus (Rat), this protein is Dehydrogenase/reductase SDR family member 7B (Dhrs7b).